A 420-amino-acid polypeptide reads, in one-letter code: Histidine--tRNA ligase (420 aa).

The protein belongs to the class-II aminoacyl-tRNA synthetase family. As to quaternary structure, homodimer.

It is found in the cytoplasm. It catalyses the reaction tRNA(His) + L-histidine + ATP = L-histidyl-tRNA(His) + AMP + diphosphate + H(+). This Anaplasma phagocytophilum (strain HZ) protein is Histidine--tRNA ligase.